Here is a 297-residue protein sequence, read N- to C-terminus: TGF-beta receptor type-2 (297 aa).

Residues 1–23 form the signal peptide; that stretch reads MGRGLLGGLWPLHVVLWTRIAST. The Extracellular segment spans residues 24–166; that stretch reads IPPHVPKSVN…NPDLLLVIFQ (143 aa). 6 cysteine pairs are disulfide-bonded: Cys-51–Cys-84, Cys-54–Cys-71, Cys-61–Cys-67, Cys-77–Cys-101, Cys-121–Cys-136, and Cys-138–Cys-143. Asn-70 and Asn-94 each carry an N-linked (GlcNAc...) asparagine glycan. Residues 167 to 187 form a helical membrane-spanning segment; that stretch reads VTGVSLLPPLGIAIAVIITFY. The Cytoplasmic portion of the chain corresponds to 188-297; it reads CYRVHRQQKL…KTEKDIFSDL (110 aa). A Protein kinase domain is found at 244–297; it reads IELDTLVGKGRFAEVYKAKLRQNTSEQFETVAVKIFPYEEYASWKTEKDIFSDL. Residues 250 to 258 and Lys-277 contribute to the ATP site; that span reads VGKGRFAEV.

This sequence belongs to the protein kinase superfamily. TKL Ser/Thr protein kinase family. TGFB receptor subfamily. Homodimer. Heterohexamer; TGFB1, TGFB2 and TGFB3 homodimeric ligands assemble a functional receptor composed of two TGFBR1 and TGFBR2 heterodimers to form a ligand-receptor heterohexamer. The respective affinity of TGFRB1 and TGFRB2 for the ligands may modulate the kinetics of assembly of the receptor and may explain the different biological activities of TGFB1, TGFB2 and TGFB3. Component of a complex composed of TSC22D1 (via N-terminus), TGFBR1 and TGFBR2; the interaction between TSC22D1 and TGFBR1 is inhibited by SMAD7 and promoted by TGFB1. Interacts with DAXX. Interacts with DYNLT4. Interacts with ZFYVE9; ZFYVE9 recruits SMAD2 and SMAD3 to the TGF-beta receptor. Interacts with and is activated by SCUBE3; this interaction does not affect TGFB1-binding to TGFBR2. Interacts with VPS39; this interaction is independent of the receptor kinase activity and of the presence of TGF-beta. Interacts with CLU. It depends on Mg(2+) as a cofactor. Mn(2+) serves as cofactor. Post-translationally, phosphorylated on a Ser/Thr residue in the cytoplasmic domain.

It localises to the cell membrane. Its subcellular location is the membrane raft. It carries out the reaction L-threonyl-[receptor-protein] + ATP = O-phospho-L-threonyl-[receptor-protein] + ADP + H(+). It catalyses the reaction L-seryl-[receptor-protein] + ATP = O-phospho-L-seryl-[receptor-protein] + ADP + H(+). Its function is as follows. Transmembrane serine/threonine kinase forming with the TGF-beta type I serine/threonine kinase receptor, TGFBR1, the non-promiscuous receptor for the TGF-beta cytokines TGFB1, TGFB2 and TGFB3. Transduces the TGFB1, TGFB2 and TGFB3 signal from the cell surface to the cytoplasm and is thus regulating a plethora of physiological and pathological processes including cell cycle arrest in epithelial and hematopoietic cells, control of mesenchymal cell proliferation and differentiation, wound healing, extracellular matrix production, immunosuppression and carcinogenesis. The formation of the receptor complex composed of 2 TGFBR1 and 2 TGFBR2 molecules symmetrically bound to the cytokine dimer results in the phosphorylation and the activation of TGFRB1 by the constitutively active TGFBR2. Activated TGFBR1 phosphorylates SMAD2 which dissociates from the receptor and interacts with SMAD4. The SMAD2-SMAD4 complex is subsequently translocated to the nucleus where it modulates the transcription of the TGF-beta-regulated genes. This constitutes the canonical SMAD-dependent TGF-beta signaling cascade. Also involved in non-canonical, SMAD-independent TGF-beta signaling pathways. The protein is TGF-beta receptor type-2 (TGFBR2) of Sus scrofa (Pig).